Here is a 164-residue protein sequence, read N- to C-terminus: Ribosome maturation factor RimP (164 aa).

It belongs to the RimP family.

It is found in the cytoplasm. Required for maturation of 30S ribosomal subunits. In Thermodesulfovibrio yellowstonii (strain ATCC 51303 / DSM 11347 / YP87), this protein is Ribosome maturation factor RimP.